Reading from the N-terminus, the 970-residue chain is Protein tweety (970 aa).

Over 1–47 the chain is Extracellular; sequence MGDYHEFTDQYKVPVIAKLLHALPHYNITFHKINSTFRPNDEIYLES. Asn27 and Asn34 each carry an N-linked (GlcNAc...) asparagine glycan. A helical membrane pass occupies residues 48-68; the sequence is LGILGSVPAALLIVSLLGLLF. The Cytoplasmic portion of the chain corresponds to 69–89; the sequence is YLMTRCCDRKPRPAHSITSLK. The chain crosses the membrane as a helical span at residues 90–110; that stretch reads VALSIVTVMCCAAIGLGLYGN. Over 111 to 219 the chain is Extracellular; that stretch reads DDLHNGLLEV…GDQWELIRWP (109 aa). Asn136, Asn166, and Asn183 each carry an N-linked (GlcNAc...) asparagine glycan. A helical transmembrane segment spans residues 220–240; sequence GTVATLALLLVLCAVLLVGVA. Topologically, residues 241 to 246 are cytoplasmic; that stretch reads RHSRCA. A helical membrane pass occupies residues 247–267; that stretch reads LILFSVCGLLAVTGSWLMSGL. Residues 268–395 lie on the Extracellular side of the membrane; sequence YLSSSVAVGD…RGLCEGGLLG (128 aa). Asn359 carries an N-linked (GlcNAc...) asparagine glycan. The chain crosses the membrane as a helical span at residues 396–416; sequence LVLMLIASFIAAILLTIMVWV. Residues 417–970 are Cytoplasmic-facing; it reads DSHTWIYIRK…DESNYAVTEL (554 aa). Low complexity predominate over residues 532-571; that stretch reads NAAANMPPTTQAAQQQQQQQAQQQQQQAQQQLGGPQPIYC. Disordered stretches follow at residues 532–587, 677–763, and 849–970; these read NAAA…QHPH, RQNS…NESD, and MKAI…VTEL. The span at 572-587 shows a compositional bias: basic residues; the sequence is HHPHQHPHPHPHQHPH. 3 stretches are compositionally biased toward low complexity: residues 689 to 700, 707 to 737, and 745 to 759; these read HQHPPSLHQQQQ, QQQQQLHQLKSPQQHQQQLQQHQQQQQQQHH, and QHQQQQQQHHQQQQP. Residues 852–868 show a composition bias toward pro residues; the sequence is IPPPRIGTPTSPPPPVA. 2 stretches are compositionally biased toward gly residues: residues 883–894 and 931–945; these read QNGGAVVGGGGA and NGGGGGSVGGGGGGA. Positions 961 to 970 are enriched in polar residues; sequence DESNYAVTEL.

Belongs to the tweety family.

It is found in the cell membrane. Non-essential protein that probably acts as a chloride channel. This Drosophila melanogaster (Fruit fly) protein is Protein tweety (tty).